We begin with the raw amino-acid sequence, 188 residues long: Peroxidase B (188 aa).

The protein belongs to the peroxidase family. Partially N-glycosylated.

It localises to the secreted. It catalyses the reaction 2 a phenolic donor + H2O2 = 2 a phenolic radical donor + 2 H2O. This is Peroxidase B from Aloe vera (Aloe).